Here is a 246-residue protein sequence, read N- to C-terminus: Mast cell protease 4 (246 aa).

A signal peptide spans 1 to 18 (MQALLFLMALLLPSGAGA). Positions 19 to 20 (EE) are cleaved as a propeptide — activation peptide. The region spanning 21–244 (IIGGVESRPH…YVPWINRVIK (224 aa)) is the Peptidase S1 domain. An intrachain disulfide couples Cys50 to Cys66. Residues His65 and Asp109 each act as charge relay system in the active site. 2 disulfides stabilise this stretch: Cys143-Cys208 and Cys174-Cys187. Ser202 functions as the Charge relay system in the catalytic mechanism.

This sequence belongs to the peptidase S1 family. Granzyme subfamily. As to quaternary structure, monomer. Interacts with iripin-2, a serine protease inhibitor from Ixodes ricinus saliva. In terms of tissue distribution, submucosal mast cells. In femoral muscle, detected in myocytes but not in mast cells.

Its activity is regulated as follows. Completely inhibited by serine protease inhibitors such as chymostatin, diisopropylfluorophosphate and phenylmethylsulfonyl fluoride, but not by p-tosyl-L-phenylalanine chloromethyl ketone, p-tosyl-L-lysine chloromethyl ketone, pepstatin, E-64, EDTA or o-phenanthroline. Also inhibited by lima bean trypsin inhibitor, soy bean trypsin inhibitor and human plasma alpha1-antichymotrypsin. Functionally, has chymotrypsin-like activity. Hydrolyzes the amide bonds of synthetic substrates having Tyr and Phe residues at the P1 position. Preferentially hydrolyzes the 'Tyr-4-|-Ile-5' bond of angiotensin I and the 'Phe-20-|-Ala-21' bond of amyloid beta-protein, and is less active towards the 'Phe-8-|-His-9' bond of angiotensin I and the 'Phe-4-|-Ala-5' and 'Tyr-10-|-Glu-11' bonds of amyloid beta-protein. Involved in thrombin regulation and fibronectin processing. This Mus musculus (Mouse) protein is Mast cell protease 4 (Mcpt4).